The chain runs to 133 residues: Large ribosomal subunit protein uL14 (133 aa).

The protein belongs to the universal ribosomal protein uL14 family. As to quaternary structure, part of the 50S ribosomal subunit. Forms a cluster with proteins L3 and L24e, part of which may contact the 16S rRNA in 2 intersubunit bridges.

Binds to 23S rRNA. Forms part of two intersubunit bridges in the 70S ribosome. The protein is Large ribosomal subunit protein uL14 of Nanoarchaeum equitans (strain Kin4-M).